The sequence spans 336 residues: D-erythrose-4-phosphate dehydrogenase (336 aa).

11–12 (RI) lines the NAD(+) pocket. Substrate is bound by residues 153–155 (SCT), Arg-199, 212–213 (TR), and Arg-235. The active-site Nucleophile is the Cys-154. Asn-317 provides a ligand contact to NAD(+).

Belongs to the glyceraldehyde-3-phosphate dehydrogenase family. Epd subfamily. Homotetramer.

It localises to the cytoplasm. It catalyses the reaction D-erythrose 4-phosphate + NAD(+) + H2O = 4-phospho-D-erythronate + NADH + 2 H(+). It participates in cofactor biosynthesis; pyridoxine 5'-phosphate biosynthesis; pyridoxine 5'-phosphate from D-erythrose 4-phosphate: step 1/5. Functionally, catalyzes the NAD-dependent conversion of D-erythrose 4-phosphate to 4-phosphoerythronate. This chain is D-erythrose-4-phosphate dehydrogenase, found in Alteromonas mediterranea (strain DSM 17117 / CIP 110805 / LMG 28347 / Deep ecotype).